The sequence spans 156 residues: Snaclec A12 (156 aa).

The first 23 residues, methionine 1 to alanine 23, serve as a signal peptide directing secretion. 3 disulfides stabilise this stretch: cysteine 27–cysteine 38, cysteine 55–cysteine 148, and cysteine 123–cysteine 140. Residues tyrosine 34–methionine 149 form the C-type lectin domain.

It belongs to the snaclec family. Heterodimer; disulfide-linked. In terms of tissue distribution, expressed by the venom gland.

Its subcellular location is the secreted. Its function is as follows. Interferes with one step of hemostasis (modulation of platelet aggregation, or coagulation cascade, for example). This chain is Snaclec A12, found in Macrovipera lebetinus (Levantine viper).